Reading from the N-terminus, the 383-residue chain is Acetylornithine deacetylase (383 aa).

Residue H80 participates in Zn(2+) binding. Residue D82 is part of the active site. Residue D112 participates in Zn(2+) binding. E144 is an active-site residue. Residues E145, E169, and H355 each coordinate Zn(2+).

This sequence belongs to the peptidase M20A family. ArgE subfamily. Homodimer. It depends on Zn(2+) as a cofactor. The cofactor is Co(2+). Glutathione serves as cofactor.

The protein resides in the cytoplasm. It catalyses the reaction N(2)-acetyl-L-ornithine + H2O = L-ornithine + acetate. The protein operates within amino-acid biosynthesis; L-arginine biosynthesis; L-ornithine from N(2)-acetyl-L-ornithine (linear): step 1/1. Its function is as follows. Catalyzes the hydrolysis of the amide bond of N(2)-acetylated L-amino acids. Cleaves the acetyl group from N-acetyl-L-ornithine to form L-ornithine, an intermediate in L-arginine biosynthesis pathway, and a branchpoint in the synthesis of polyamines. This Escherichia coli O139:H28 (strain E24377A / ETEC) protein is Acetylornithine deacetylase.